Here is a 164-residue protein sequence, read N- to C-terminus: Large ribosomal subunit protein bL9 (164 aa).

The protein belongs to the bacterial ribosomal protein bL9 family.

Binds to the 23S rRNA. The chain is Large ribosomal subunit protein bL9 from Borrelia hermsii (strain HS1 / DAH).